A 103-amino-acid chain; its full sequence is Histone H4 (103 aa).

The segment covering 1 to 14 has biased composition (gly residues); it reads MSGRGKGGKGLGKG. Residues 1–20 form a disordered region; sequence MSGRGKGGKGLGKGGAKRHR. Position 2 is an N-acetylserine (serine 2). The residue at position 17 (lysine 17) is an N6-acetyllysine. The DNA-binding element occupies 17–21; the sequence is KRHRR. The residue at position 80 (lysine 80) is an N6-methylated lysine.

Belongs to the histone H4 family. In terms of assembly, the nucleosome is a histone octamer containing two molecules each of H2A, H2B, H3 and H4 assembled in one H3-H4 heterotetramer and two H2A-H2B heterodimers. The octamer wraps approximately 147 bp of DNA.

The protein resides in the nucleus. Its subcellular location is the chromosome. Core component of nucleosome. Nucleosomes wrap and compact DNA into chromatin, limiting DNA accessibility to the cellular machineries which require DNA as a template. Histones thereby play a central role in transcription regulation, DNA repair, DNA replication and chromosomal stability. DNA accessibility is regulated via a complex set of post-translational modifications of histones, also called histone code, and nucleosome remodeling. The protein is Histone H4 of Olisthodiscus luteus (Marine phytoflagellate).